Here is a 236-residue protein sequence, read N- to C-terminus: tRNA1(Val) (adenine(37)-N6)-methyltransferase (236 aa).

Belongs to the methyltransferase superfamily. tRNA (adenine-N(6)-)-methyltransferase family.

The protein resides in the cytoplasm. The enzyme catalyses adenosine(37) in tRNA1(Val) + S-adenosyl-L-methionine = N(6)-methyladenosine(37) in tRNA1(Val) + S-adenosyl-L-homocysteine + H(+). In terms of biological role, specifically methylates the adenine in position 37 of tRNA(1)(Val) (anticodon cmo5UAC). In Aeromonas salmonicida (strain A449), this protein is tRNA1(Val) (adenine(37)-N6)-methyltransferase.